Here is a 727-residue protein sequence, read N- to C-terminus: Glycerol-3-phosphate dehydrogenase, mitochondrial (727 aa).

A mitochondrion-targeting transit peptide spans Met1–Ala42. Asp71–Glu99 lines the FAD pocket. Tyr601 carries the phosphotyrosine modification. EF-hand domains lie at Ser623–Gln658 and Met659–Gly694. The Ca(2+) site is built by Asp672, Asn674, Asn676, Gln678, and Glu683.

The protein belongs to the FAD-dependent glycerol-3-phosphate dehydrogenase family. It depends on FAD as a cofactor.

The protein localises to the mitochondrion. The catalysed reaction is a quinone + sn-glycerol 3-phosphate = dihydroxyacetone phosphate + a quinol. It participates in polyol metabolism; glycerol degradation via glycerol kinase pathway; glycerone phosphate from sn-glycerol 3-phosphate (aerobic route): step 1/1. Calcium-binding enhance the activity of the enzyme. In terms of biological role, calcium-responsive mitochondrial glycerol-3-phosphate dehydrogenase which seems to be a key component of the pancreatic beta-cell glucose-sensing device. This is Glycerol-3-phosphate dehydrogenase, mitochondrial (GPD2) from Bos taurus (Bovine).